Reading from the N-terminus, the 175-residue chain is Large ribosomal subunit protein uL10 (175 aa).

The protein belongs to the universal ribosomal protein uL10 family. In terms of assembly, part of the ribosomal stalk of the 50S ribosomal subunit. The N-terminus interacts with L11 and the large rRNA to form the base of the stalk. The C-terminus forms an elongated spine to which L12 dimers bind in a sequential fashion forming a multimeric L10(L12)X complex.

Functionally, forms part of the ribosomal stalk, playing a central role in the interaction of the ribosome with GTP-bound translation factors. The protein is Large ribosomal subunit protein uL10 of Pelotomaculum thermopropionicum (strain DSM 13744 / JCM 10971 / SI).